The chain runs to 463 residues: Sporulation-specific protein 22 (463 aa).

The first 25 residues, 1 to 25, serve as a signal peptide directing secretion; the sequence is MNRITRKSCLFAIIFASLFVTHALG. LRR repeat units follow at residues 127–147, 185–206, 207–233, 251–275, and 302–325; these read SPEL…LFQL, IEII…NFNK, VQEI…TIRG, LREV…KVKS, and INNV…LMIA. Residues N256, N314, and N327 are each glycosylated (N-linked (GlcNAc...) asparagine). The GPI-anchor amidated asparagine moiety is linked to residue N440. The propeptide at 441–463 is removed in mature form; sequence SANPSMQLDPLLFGTCLVAMLLF.

Belongs to the SPS2 family.

The protein localises to the cell membrane. In terms of biological role, redundant with SPS2 for the organization of the beta-glucan layer of the spore wall. This chain is Sporulation-specific protein 22 (SPS22), found in Saccharomyces cerevisiae (strain ATCC 204508 / S288c) (Baker's yeast).